Here is a 286-residue protein sequence, read N- to C-terminus: Merozoite surface protein 2 (286 aa).

Positions 1-20 are cleaved as a signal peptide; sequence MKVIKTLSIINFFIFVTFNI. Residues asparagine 22 and asparagine 36 are each glycosylated (N-linked (GlcNAc...) asparagine). Residues 43–248 are disordered; the sequence is MTESKTPTPT…SQKECTDGNK (206 aa). Residues 44-212 form a polymorphic region region; the sequence is TESKTPTPTG…EQTESPELQS (169 aa). Positions 54–68 are enriched in gly residues; it reads AGAGASGSAGSGDGA. Copy 1 of the repeat occupies 59–68; the sequence is SGSAGSGDGA. The tract at residues 59 to 106 is 5 X 10 AA tandem repeats of S-G-S-A-[GS]-[GS]-[AD]-G-A; that stretch reads SGSAGSGDGASGSASGSASGSASGSAGASGSASGSAGASGSASGSAGA. The stretch at 69–76 is one 2; partial repeat; sequence SGSASGSA. A compositionally biased stretch (low complexity) spans 69 to 137; that stretch reads SGSASGSASG…STSTSSENPN (69 aa). 3 tandem repeats follow at residues 77–86, 88–96, and 97–106. Composition is skewed to polar residues over residues 153 to 179 and 186 to 214; these read KPNQ…NVPP and KSPT…QSAP. Asparagine 163 carries an N-linked (GlcNAc...) asparagine glycan. An N-linked (GlcNAc...) asparagine glycan is attached at asparagine 235. Residues 239-248 show a composition bias toward basic and acidic residues; it reads SQKECTDGNK. An intrachain disulfide couples cysteine 243 to cysteine 251. Asparagine 259 and asparagine 260 each carry an N-linked (GlcNAc...) asparagine glycan. Asparagine 260 carries the GPI-anchor amidated asparagine lipid modification. Positions 261–286 are cleaved as a propeptide — removed in mature form; sequence SSNIASINKFVVLISATLVLSFAIFI.

It localises to the cell membrane. May play a role in the merozoite attachment to the erythrocyte. The sequence is that of Merozoite surface protein 2 from Plasmodium falciparum (isolate 311).